We begin with the raw amino-acid sequence, 534 residues long: Arginine--tRNA ligase (534 aa).

The 'HIGH' region motif lies at Ala120–His130.

This sequence belongs to the class-I aminoacyl-tRNA synthetase family. As to quaternary structure, monomer.

It is found in the cytoplasm. The catalysed reaction is tRNA(Arg) + L-arginine + ATP = L-arginyl-tRNA(Arg) + AMP + diphosphate. This is Arginine--tRNA ligase from Mesomycoplasma hyopneumoniae (strain J / ATCC 25934 / NCTC 10110) (Mycoplasma hyopneumoniae).